Here is a 213-residue protein sequence, read N- to C-terminus: Ribonuclease HII (213 aa).

Positions 18–213 (GLHAGVDEVG…RPVKERLAKR (196 aa)) constitute an RNase H type-2 domain. A divalent metal cation contacts are provided by Asp24, Glu25, and Asp116.

It belongs to the RNase HII family. Mn(2+) is required as a cofactor. The cofactor is Mg(2+).

The protein localises to the cytoplasm. It catalyses the reaction Endonucleolytic cleavage to 5'-phosphomonoester.. Endonuclease that specifically degrades the RNA of RNA-DNA hybrids. The sequence is that of Ribonuclease HII from Shewanella woodyi (strain ATCC 51908 / MS32).